Reading from the N-terminus, the 130-residue chain is Small ribosomal subunit protein uS11 (130 aa).

The protein belongs to the universal ribosomal protein uS11 family. Part of the 30S ribosomal subunit. Interacts with proteins S7 and S18. Binds to IF-3.

Its function is as follows. Located on the platform of the 30S subunit, it bridges several disparate RNA helices of the 16S rRNA. Forms part of the Shine-Dalgarno cleft in the 70S ribosome. The sequence is that of Small ribosomal subunit protein uS11 from Latilactobacillus sakei subsp. sakei (strain 23K) (Lactobacillus sakei subsp. sakei).